The following is a 172-amino-acid chain: 3-hydroxydecanoyl-[acyl-carrier-protein] dehydratase (172 aa).

His-71 is a catalytic residue.

Belongs to the thioester dehydratase family. FabA subfamily. As to quaternary structure, homodimer.

The protein localises to the cytoplasm. It catalyses the reaction a (3R)-hydroxyacyl-[ACP] = a (2E)-enoyl-[ACP] + H2O. The catalysed reaction is (3R)-hydroxydecanoyl-[ACP] = (2E)-decenoyl-[ACP] + H2O. It carries out the reaction (2E)-decenoyl-[ACP] = (3Z)-decenoyl-[ACP]. Its pathway is lipid metabolism; fatty acid biosynthesis. Necessary for the introduction of cis unsaturation into fatty acids. Catalyzes the dehydration of (3R)-3-hydroxydecanoyl-ACP to E-(2)-decenoyl-ACP and then its isomerization to Z-(3)-decenoyl-ACP. Can catalyze the dehydratase reaction for beta-hydroxyacyl-ACPs with saturated chain lengths up to 16:0, being most active on intermediate chain length. This Vibrio parahaemolyticus serotype O3:K6 (strain RIMD 2210633) protein is 3-hydroxydecanoyl-[acyl-carrier-protein] dehydratase.